The primary structure comprises 107 residues: Heme-degrading monooxygenase (107 aa).

In terms of domain architecture, ABM spans 2–94; sequence IIVTNTTKIT…YILDNKIAYY (93 aa). Asn-6 provides a ligand contact to Fe cation. Heme is bound at residue His-76.

It belongs to the antibiotic biosynthesis monooxygenase family. Heme-degrading monooxygenase IsdG subfamily. As to quaternary structure, homodimer.

Its subcellular location is the cytoplasm. The catalysed reaction is heme b + 3 reduced [NADPH--hemoprotein reductase] + 3 O2 = biliverdin IXalpha + CO + Fe(2+) + 3 oxidized [NADPH--hemoprotein reductase] + 3 H2O + H(+). Allows bacterial pathogens to use the host heme as an iron source. Catalyzes the oxidative degradation of the heme macrocyclic porphyrin ring to the biliverdin in the presence of a suitable electron donor such as ascorbate or NADPH--cytochrome P450 reductase, with subsequent release of free iron. This is Heme-degrading monooxygenase from Bacillus mycoides (strain KBAB4) (Bacillus weihenstephanensis).